Reading from the N-terminus, the 130-residue chain is Small ribosomal subunit protein uS11c (130 aa).

It belongs to the universal ribosomal protein uS11 family. As to quaternary structure, part of the 30S ribosomal subunit.

It is found in the plastid. Its subcellular location is the chloroplast. In Physcomitrium patens (Spreading-leaved earth moss), this protein is Small ribosomal subunit protein uS11c.